A 245-amino-acid polypeptide reads, in one-letter code: Leucyl/phenylalanyl-tRNA--protein transferase (245 aa).

It belongs to the L/F-transferase family.

Its subcellular location is the cytoplasm. It catalyses the reaction N-terminal L-lysyl-[protein] + L-leucyl-tRNA(Leu) = N-terminal L-leucyl-L-lysyl-[protein] + tRNA(Leu) + H(+). The enzyme catalyses N-terminal L-arginyl-[protein] + L-leucyl-tRNA(Leu) = N-terminal L-leucyl-L-arginyl-[protein] + tRNA(Leu) + H(+). The catalysed reaction is L-phenylalanyl-tRNA(Phe) + an N-terminal L-alpha-aminoacyl-[protein] = an N-terminal L-phenylalanyl-L-alpha-aminoacyl-[protein] + tRNA(Phe). Functions in the N-end rule pathway of protein degradation where it conjugates Leu, Phe and, less efficiently, Met from aminoacyl-tRNAs to the N-termini of proteins containing an N-terminal arginine or lysine. The chain is Leucyl/phenylalanyl-tRNA--protein transferase from Paraburkholderia xenovorans (strain LB400).